The chain runs to 234 residues: tRNA (guanine-N(1)-)-methyltransferase (234 aa).

Residues Gly-110 and 134–139 (IGDYVL) each bind S-adenosyl-L-methionine.

Belongs to the RNA methyltransferase TrmD family. In terms of assembly, homodimer.

It localises to the cytoplasm. It catalyses the reaction guanosine(37) in tRNA + S-adenosyl-L-methionine = N(1)-methylguanosine(37) in tRNA + S-adenosyl-L-homocysteine + H(+). Its function is as follows. Specifically methylates guanosine-37 in various tRNAs. The sequence is that of tRNA (guanine-N(1)-)-methyltransferase from Tropheryma whipplei (strain Twist) (Whipple's bacillus).